The following is a 194-amino-acid chain: Imidazoleglycerol-phosphate dehydratase (194 aa).

It belongs to the imidazoleglycerol-phosphate dehydratase family.

It is found in the cytoplasm. It catalyses the reaction D-erythro-1-(imidazol-4-yl)glycerol 3-phosphate = 3-(imidazol-4-yl)-2-oxopropyl phosphate + H2O. Its pathway is amino-acid biosynthesis; L-histidine biosynthesis; L-histidine from 5-phospho-alpha-D-ribose 1-diphosphate: step 6/9. In Lacticaseibacillus paracasei (strain ATCC 334 / BCRC 17002 / CCUG 31169 / CIP 107868 / KCTC 3260 / NRRL B-441) (Lactobacillus paracasei), this protein is Imidazoleglycerol-phosphate dehydratase.